We begin with the raw amino-acid sequence, 95 residues long: Co-chaperonin GroES (95 aa).

This sequence belongs to the GroES chaperonin family. In terms of assembly, heptamer of 7 subunits arranged in a ring. Interacts with the chaperonin GroEL.

The protein localises to the cytoplasm. Together with the chaperonin GroEL, plays an essential role in assisting protein folding. The GroEL-GroES system forms a nano-cage that allows encapsulation of the non-native substrate proteins and provides a physical environment optimized to promote and accelerate protein folding. GroES binds to the apical surface of the GroEL ring, thereby capping the opening of the GroEL channel. The protein is Co-chaperonin GroES of Pseudoalteromonas translucida (strain TAC 125).